A 775-amino-acid chain; its full sequence is Endothelin-converting enzyme-like 1 (775 aa).

At 1–59 the chain is on the cytoplasmic side; sequence MEPPYSLTAHYDEFQEVKYVSRCGAGGARGASLPPGFPLGAARSATGARSGLPRWNRRE. The helical; Signal-anchor for type II membrane protein transmembrane segment at 60-82 threads the bilayer; that stretch reads VCLLSGLVFAAGLCAILAAMLAL. Residues 83–775 lie on the Lumenal side of the membrane; the sequence is KYLGPVAAGG…MNPAHKCSVW (693 aa). Residues 98–775 enclose the Peptidase M13 domain; it reads GCPERKAFAR…MNPAHKCSVW (678 aa). Cystine bridges form between Cys-123/Cys-760, Cys-131/Cys-720, Cys-187/Cys-441, and Cys-649/Cys-772. Residues Asn-255 and Asn-322 are each glycosylated (N-linked (GlcNAc...) asparagine). His-612 is a Zn(2+) binding site. Glu-613 is a catalytic residue. His-616 lines the Zn(2+) pocket. Asn-656 carries an N-linked (GlcNAc...) asparagine glycan. Glu-672 provides a ligand contact to Zn(2+). Asp-676 acts as the Proton donor in catalysis.

The protein belongs to the peptidase M13 family. The cofactor is Zn(2+). N-glycosylated. Highly expressed in the CNS, in particular in putamen, spinal cord, medulla and subthalamic nucleus. A strong signal was also detected in uterine subepithelial cells and around renal blood vessels. Detected at lower levels in amygdala, caudate, thalamus, pancreas and skeletal muscle. Detected at very low levels in substantia nigra, cerebellum, cortex, corpus callosum and hippocampus.

The protein localises to the membrane. Its function is as follows. May contribute to the degradation of peptide hormones and be involved in the inactivation of neuronal peptides. In Homo sapiens (Human), this protein is Endothelin-converting enzyme-like 1 (ECEL1).